We begin with the raw amino-acid sequence, 445 residues long: Phosphoglucosamine mutase (445 aa).

The Phosphoserine intermediate role is filled by S101. 4 residues coordinate Mg(2+): S101, D240, D242, and D244. At S101 the chain carries Phosphoserine.

It belongs to the phosphohexose mutase family. It depends on Mg(2+) as a cofactor. Activated by phosphorylation.

It catalyses the reaction alpha-D-glucosamine 1-phosphate = D-glucosamine 6-phosphate. Functionally, catalyzes the conversion of glucosamine-6-phosphate to glucosamine-1-phosphate. The protein is Phosphoglucosamine mutase of Pseudomonas aeruginosa (strain LESB58).